A 69-amino-acid polypeptide reads, in one-letter code: Pancreatic propolypeptide YG (69 aa).

It belongs to the NPY family.

The protein resides in the secreted. The sequence is that of Pancreatic propolypeptide YG from Lophius americanus (American angler).